We begin with the raw amino-acid sequence, 282 residues long: NH(3)-dependent NAD(+) synthetase (282 aa).

51–58 (GISGGVDS) is a binding site for ATP. Residue Asp57 coordinates Mg(2+). Arg148 contributes to the deamido-NAD(+) binding site. Thr168 serves as a coordination point for ATP. Glu173 serves as a coordination point for Mg(2+). Positions 181 and 188 each coordinate deamido-NAD(+). Residues Lys197 and Thr219 each coordinate ATP. Residue 268–269 (HK) coordinates deamido-NAD(+).

Belongs to the NAD synthetase family. In terms of assembly, homodimer.

The enzyme catalyses deamido-NAD(+) + NH4(+) + ATP = AMP + diphosphate + NAD(+) + H(+). It participates in cofactor biosynthesis; NAD(+) biosynthesis; NAD(+) from deamido-NAD(+) (ammonia route): step 1/1. Catalyzes the ATP-dependent amidation of deamido-NAD to form NAD. Uses ammonia as a nitrogen source. The protein is NH(3)-dependent NAD(+) synthetase of Burkholderia cenocepacia (strain HI2424).